The chain runs to 144 residues: Ferredoxin-thioredoxin reductase catalytic chain, chloroplastic (144 aa).

The transit peptide at 1-31 (MKALQASIAYSFPISSPAASPRRFSRVIRAQ) directs the protein to the chloroplast. Cys-83 is a binding site for [4Fe-4S] cluster. The active-site Nucleophile is Cys-85. Cys-85 and Cys-115 are joined by a disulfide. Residues Cys-102, Cys-104, and Cys-113 each contribute to the [4Fe-4S] cluster site.

This sequence belongs to the ferredoxin thioredoxin reductase beta subunit family. As to quaternary structure, heterodimer of subunit A (variable subunit) and subunit B (catalytic subunit). Heterodimeric FTR forms a complex with ferredoxin and thioredoxin. [4Fe-4S] cluster serves as cofactor.

It localises to the plastid. The protein resides in the chloroplast. The enzyme catalyses [thioredoxin]-disulfide + 2 reduced [2Fe-2S]-[ferredoxin] + 2 H(+) = [thioredoxin]-dithiol + 2 oxidized [2Fe-2S]-[ferredoxin]. Functionally, catalytic subunit of the ferredoxin-thioredoxin reductase (FTR), which catalyzes the two-electron reduction of thioredoxins by the electrons provided by reduced ferredoxin. The polypeptide is Ferredoxin-thioredoxin reductase catalytic chain, chloroplastic (FTRC) (Spinacia oleracea (Spinach)).